Consider the following 243-residue polypeptide: MSLFNLPKVDLGEDCEGGVUARPSSSSSSINNASDESTPLISKTNDEEKANIGISSTSNSPQEEQTKKPLFISILTLLISIPALVGSUCWPVLIASLSGVAVSAGSVELAHSLTFAITLSILSNLAQYHFHKCKKRPSDRGHWIKFGPFYLTAIAVPLATFDILRHILVDNSIWTIHSFISPAAYRPGCENENITCLSVMGWFSAIVFTYTGYACLLVGTIWAADLIPKIKKVWTQLRPSKKN.

The interval Gly-12 to Glu-63 is disordered. A non-standard amino acid (selenocysteine) is located at residue Sec-20. Polar residues-rich tracts occupy residues Ile-30–Lys-43 and Gly-53–Glu-63. Helical transmembrane passes span Ile-74–Ile-94, Val-102–Leu-122, Ile-144–Leu-164, and Val-199–Gly-219. Sec-88 is a non-standard amino acid (selenocysteine).

It is found in the membrane. This chain is Membrane selenoprotein (msp), found in Dictyostelium discoideum (Social amoeba).